The chain runs to 95 residues: Large ribosomal subunit protein bL25 (95 aa).

The protein belongs to the bacterial ribosomal protein bL25 family. As to quaternary structure, part of the 50S ribosomal subunit; part of the 5S rRNA/L5/L18/L25 subcomplex. Contacts the 5S rRNA. Binds to the 5S rRNA independently of L5 and L18.

This is one of the proteins that binds to the 5S RNA in the ribosome where it forms part of the central protuberance. The sequence is that of Large ribosomal subunit protein bL25 from Actinobacillus pleuropneumoniae serotype 5b (strain L20).